A 361-amino-acid chain; its full sequence is MDEMFDKLQAVADRYDELNELISDPEVIADTQRFMALSKEEGELRETVDKYHQYQDVTQQIADDDEMLHDKLDADMESMIKDELKELTAQKAALEEDIKVLLLPKDPNDDKNIIMEIHGAAGGDEASLFAADLFSMYSKYAERQGWQIEVVDENATEVGGFKEIVMMITGNKVYSKLKYENGAHRVQRVPVTESAGRVHTSTATVGVMPEEEDVDIDIDPKDIRTDVYRSSGAGGQHINKTSSAVRMTHLPTGIVVAMQDERSQQQNRAKAMQILRARVYDYYKQQEESAYNAERKSAVGTGDRSERIRTYNYPQNRVTDHRIGLTLNKLDRIMNGELDDIIDALIVSDQAAKLEDLKNNG.

The residue at position 236 (Gln236) is an N5-methylglutamine.

This sequence belongs to the prokaryotic/mitochondrial release factor family. Methylated by PrmC. Methylation increases the termination efficiency of RF1.

Its subcellular location is the cytoplasm. In terms of biological role, peptide chain release factor 1 directs the termination of translation in response to the peptide chain termination codons UAG and UAA. The polypeptide is Peptide chain release factor 1 (Levilactobacillus brevis (strain ATCC 367 / BCRC 12310 / CIP 105137 / JCM 1170 / LMG 11437 / NCIMB 947 / NCTC 947) (Lactobacillus brevis)).